The following is a 429-amino-acid chain: Tryptophan synthase beta chain 2 (429 aa).

Position 111 is an N6-(pyridoxal phosphate)lysine (K111).

Belongs to the TrpB family. In terms of assembly, tetramer of two alpha and two beta chains. Pyridoxal 5'-phosphate serves as cofactor.

It catalyses the reaction (1S,2R)-1-C-(indol-3-yl)glycerol 3-phosphate + L-serine = D-glyceraldehyde 3-phosphate + L-tryptophan + H2O. It functions in the pathway amino-acid biosynthesis; L-tryptophan biosynthesis; L-tryptophan from chorismate: step 5/5. Functionally, the beta subunit is responsible for the synthesis of L-tryptophan from indole and L-serine. The polypeptide is Tryptophan synthase beta chain 2 (trpB2) (Saccharolobus solfataricus (strain ATCC 35092 / DSM 1617 / JCM 11322 / P2) (Sulfolobus solfataricus)).